Here is a 221-residue protein sequence, read N- to C-terminus: GTP-binding nuclear protein Ran-1 (221 aa).

Residues 10-174 enclose the Small GTPase Ran-type domain; sequence DYPSFKLVIV…LYLARKLAGD (165 aa). Residue 21 to 28 participates in GTP binding; it reads DGGTGKTT. The tract at residues 40–48 is switch-I; sequence KKYEPTIGV. Residues glycine 71, 125–128, and 153–155 contribute to the GTP site; these read NKVD and SAK. The interval 71–87 is switch-II; it reads GQEKFGGLRDGYYIHGQ.

The protein belongs to the small GTPase superfamily. Ran family. As to quaternary structure, found in a nuclear export complex with RanGTP, exportin and pre-miRNA.

The protein localises to the nucleus. Its function is as follows. GTP-binding protein involved in nucleocytoplasmic transport. Required for the import of protein into the nucleus and also for RNA export. Involved in chromatin condensation and control of cell cycle. The protein is GTP-binding nuclear protein Ran-1 (RAN1) of Oryza sativa subsp. indica (Rice).